Here is a 128-residue protein sequence, read N- to C-terminus: Ribonuclease P protein component 4 (128 aa).

4 residues coordinate Zn(2+): C67, C70, C96, and C99.

The protein belongs to the eukaryotic/archaeal RNase P protein component 4 family. As to quaternary structure, consists of a catalytic RNA component and at least 4-5 protein subunits. Requires Zn(2+) as cofactor.

The protein localises to the cytoplasm. The catalysed reaction is Endonucleolytic cleavage of RNA, removing 5'-extranucleotides from tRNA precursor.. In terms of biological role, part of ribonuclease P, a protein complex that generates mature tRNA molecules by cleaving their 5'-ends. The polypeptide is Ribonuclease P protein component 4 (Methanopyrus kandleri (strain AV19 / DSM 6324 / JCM 9639 / NBRC 100938)).